Here is a 638-residue protein sequence, read N- to C-terminus: ABC transporter G family member 12 (638 aa).

Positions 42 to 61 are disordered; that stretch reads KQEKAKKKNDTESSTGDMNT. Residues 58–301 form the ABC transporter domain; it reads DMNTGVSTTI…SLGYPCPNNT (244 aa). 91–98 lines the ATP pocket; sequence GPSGSGKS. An ABC transmembrane type-2 domain is found at 374 to 633; that stretch reads GNFVARVGTA…WTSYLALHFL (260 aa). 7 helical membrane passes run 376 to 396, 410 to 430, 459 to 479, 484 to 504, 516 to 536, 544 to 564, and 612 to 632; these read FVAR…CFAG, TIFF…SLFL, TLIV…FAHL, GHFF…DFMI, MTFA…GFYV, SFGW…LVVN, and FGVV…ALHF.

The protein belongs to the ABC transporter superfamily. ABCG family. Eye pigment precursor importer (TC 3.A.1.204) subfamily.

The protein localises to the membrane. The chain is ABC transporter G family member 12 (abcG12) from Dictyostelium discoideum (Social amoeba).